The primary structure comprises 1311 residues: Zinc finger protein 521 (1311 aa).

The segment covering Met-1 to Arg-10 has biased composition (basic residues). The tract at residues Met-1–Asp-37 is disordered. Basic and acidic residues predominate over residues Ser-11–Asp-21. The C2H2-type 1; degenerate zinc finger occupies His-47–Ile-67. The disordered stretch occupies residues Asp-81–Gly-108. Over residues Pro-87–Gly-102 the composition is skewed to low complexity. 7 C2H2-type zinc fingers span residues Tyr-118 to His-140, Phe-146 to His-168, Tyr-174 to His-196, Tyr-202 to His-224, Gln-246 to His-269, Leu-281 to His-304, and Asn-310 to His-332. Residues Val-349–Thr-358 are compositionally biased toward low complexity. The tract at residues Val-349–Ser-397 is disordered. 2 stretches are compositionally biased toward polar residues: residues Pro-359–Met-370 and Ala-387–Ser-397. The C2H2-type 9; degenerate zinc finger occupies Tyr-405 to His-429. 3 consecutive C2H2-type zinc fingers follow at residues His-437–His-460, Tyr-477–His-500, and Phe-513–His-536. Ser-546 is modified (phosphoserine). The C2H2-type 13; atypical zinc finger occupies Tyr-560–His-585. A phosphoserine mark is found at Ser-605 and Ser-608. 7 C2H2-type zinc fingers span residues Tyr-634–His-656, Leu-664–His-686, Tyr-694–His-717, Phe-722–His-745, Tyr-752–His-775, His-783–His-805, and Tyr-809–His-832. The segment at Thr-863–Ser-882 is disordered. Residues Tyr-886–Asp-908 form a C2H2-type 21; degenerate zinc finger. C2H2-type zinc fingers lie at residues Tyr-930–His-952, Tyr-959–His-981, and Phe-1020–His-1042. The C2H2-type 25; degenerate zinc finger occupies Tyr-1065 to Leu-1083. Residues Thr-1138 to His-1161 form a C2H2-type 26 zinc finger. A Glycyl lysine isopeptide (Lys-Gly) (interchain with G-Cter in SUMO2) cross-link involves residue Lys-1146. Residues Ser-1168–Val-1178 are compositionally biased toward polar residues. Residues Ser-1168–Gln-1188 are disordered. 4 consecutive C2H2-type zinc fingers follow at residues Tyr-1195–His-1217, His-1225–His-1247, Phe-1256–His-1279, and Tyr-1286–His-1309.

The protein belongs to the krueppel C2H2-type zinc-finger protein family. As to quaternary structure, interacts with EBF1. Interacts with SMAD1 and SMAD4. As to expression, predominantly expressed in hematopoietic cells. Present in organs and tissues that contain stem and progenitor cells, myeloid and/or lymphoid: placenta, spleen, lymph nodes, thymus, bone marrow and fetal liver. Within the hematopoietic system, it is abundant in CD34(+) cells but undetectable in mature peripheral blood leukocytes, and its levels rapidly decrease during the differentiation of CD34(+) cells in response to hemopoietins.

It is found in the nucleus. Transcription factor that can both act as an activator or a repressor depending on the context. Involved in BMP signaling and in the regulation of the immature compartment of the hematopoietic system. Associates with SMADs in response to BMP2 leading to activate transcription of BMP target genes. Acts as a transcriptional repressor via its interaction with EBF1, a transcription factor involved specification of B-cell lineage; this interaction preventing EBF1 to bind DNA and activate target genes. This Homo sapiens (Human) protein is Zinc finger protein 521 (ZNF521).